Here is a 585-residue protein sequence, read N- to C-terminus: Nucleus accumbens-associated protein 2 (585 aa).

The BTB domain occupies 30–94 (CDVSIVVKGQ…CYTGKLTMAA (65 aa)). Residues Lys171 and Lys215 each participate in a glycyl lysine isopeptide (Lys-Gly) (interchain with G-Cter in SUMO2) cross-link. The span at 238 to 261 (PYPQGERTSPGASSLPTTDSSTSY) shows a compositional bias: polar residues. The interval 238 to 269 (PYPQGERTSPGASSLPTTDSSTSYHNEDEDDD) is disordered. Glycyl lysine isopeptide (Lys-Gly) (interchain with G-Cter in SUMO2) cross-links involve residues Lys296, Lys426, and Lys453. The 98-residue stretch at 348–445 (GSGVYITRGQ…DMCTNARRVR (98 aa)) folds into the BEN domain. The disordered stretch occupies residues 541–585 (APEQLPADGQSSPQAFEQGNTSSSRPQTPVATATRRPEGTYAGTL). The span at 549-571 (GQSSPQAFEQGNTSSSRPQTPVA) shows a compositional bias: polar residues.

In terms of assembly, homooligomer; mediated by the BTB domain. Interacts with the NuRD complex. Interacts (via C-terminal part) with HDAC2. Interacts (via BTB domain) with MTA1, MTA2 and MTA3.

The protein localises to the nucleus. Functions as a transcriptional repressor through its association with the NuRD complex. Recruits the NuRD complex to the promoter of MDM2, leading to the repression of MDM2 transcription and subsequent stability of p53/TP53. The protein is Nucleus accumbens-associated protein 2 (Nacc2) of Rattus norvegicus (Rat).